Consider the following 62-residue polypeptide: UPF0434 protein RL4569 (62 aa).

This sequence belongs to the UPF0434 family.

This chain is UPF0434 protein RL4569, found in Rhizobium johnstonii (strain DSM 114642 / LMG 32736 / 3841) (Rhizobium leguminosarum bv. viciae).